A 367-amino-acid chain; its full sequence is Alanine racemase (367 aa).

Lys40 functions as the Proton acceptor; specific for D-alanine in the catalytic mechanism. Lys40 carries the N6-(pyridoxal phosphate)lysine modification. Arg136 contributes to the substrate binding site. Tyr263 (proton acceptor; specific for L-alanine) is an active-site residue. Substrate is bound at residue Met310.

Belongs to the alanine racemase family. Pyridoxal 5'-phosphate is required as a cofactor.

The catalysed reaction is L-alanine = D-alanine. It participates in amino-acid biosynthesis; D-alanine biosynthesis; D-alanine from L-alanine: step 1/1. Functionally, catalyzes the interconversion of L-alanine and D-alanine. May also act on other amino acids. This chain is Alanine racemase (alr), found in Streptococcus pneumoniae (strain Hungary19A-6).